A 52-amino-acid polypeptide reads, in one-letter code: uncharacterized protein (52 aa).

This is an uncharacterized protein from Caenorhabditis elegans.